A 385-amino-acid polypeptide reads, in one-letter code: Mannitol-1-phosphate 5-dehydrogenase (385 aa).

Residue 3-14 participates in NAD(+) binding; that stretch reads AVHFGAGNIGRG.

Belongs to the mannitol dehydrogenase family.

It catalyses the reaction D-mannitol 1-phosphate + NAD(+) = beta-D-fructose 6-phosphate + NADH + H(+). In Geobacillus thermodenitrificans (strain NG80-2), this protein is Mannitol-1-phosphate 5-dehydrogenase.